A 274-amino-acid chain; its full sequence is Sulfur carrier protein FdhD (274 aa).

Residue Cys121 is the Cysteine persulfide intermediate of the active site. 258 to 263 (FSKPGR) contributes to the Mo-bis(molybdopterin guanine dinucleotide) binding site.

The protein belongs to the FdhD family.

The protein resides in the cytoplasm. Required for formate dehydrogenase (FDH) activity. Acts as a sulfur carrier protein that transfers sulfur from IscS to the molybdenum cofactor prior to its insertion into FDH. In Yersinia pseudotuberculosis serotype O:1b (strain IP 31758), this protein is Sulfur carrier protein FdhD.